A 288-amino-acid chain; its full sequence is Co-chaperone protein DjlA (288 aa).

Residues 1–6 (MNFIGK) lie on the Periplasmic side of the membrane. A helical transmembrane segment spans residues 7–30 (ILGFIIGYRFGGLFGGIAGLILGH). Topologically, residues 31–288 (IADKKLYELG…DLICKVKGWK (258 aa)) are cytoplasmic. The 67-residue stretch at 222–288 (DAYKVLGVNA…DLICKVKGWK (67 aa)) folds into the J domain.

In terms of assembly, homodimer.

It is found in the cell inner membrane. Regulatory DnaK co-chaperone. Direct interaction between DnaK and DjlA is needed for the induction of the wcaABCDE operon, involved in the synthesis of a colanic acid polysaccharide capsule, possibly through activation of the RcsB/RcsC phosphotransfer signaling pathway. The colanic acid capsule may help the bacterium survive conditions outside the host. This Mannheimia succiniciproducens (strain KCTC 0769BP / MBEL55E) protein is Co-chaperone protein DjlA.